The primary structure comprises 107 residues: Pyrimidine/purine nucleoside phosphorylase (107 aa).

Belongs to the nucleoside phosphorylase PpnP family.

The catalysed reaction is a purine D-ribonucleoside + phosphate = a purine nucleobase + alpha-D-ribose 1-phosphate. It carries out the reaction adenosine + phosphate = alpha-D-ribose 1-phosphate + adenine. It catalyses the reaction cytidine + phosphate = cytosine + alpha-D-ribose 1-phosphate. The enzyme catalyses guanosine + phosphate = alpha-D-ribose 1-phosphate + guanine. The catalysed reaction is inosine + phosphate = alpha-D-ribose 1-phosphate + hypoxanthine. It carries out the reaction thymidine + phosphate = 2-deoxy-alpha-D-ribose 1-phosphate + thymine. It catalyses the reaction uridine + phosphate = alpha-D-ribose 1-phosphate + uracil. The enzyme catalyses xanthosine + phosphate = alpha-D-ribose 1-phosphate + xanthine. Its function is as follows. Catalyzes the phosphorolysis of diverse nucleosides, yielding D-ribose 1-phosphate and the respective free bases. Can use uridine, adenosine, guanosine, cytidine, thymidine, inosine and xanthosine as substrates. Also catalyzes the reverse reactions. In Aromatoleum aromaticum (strain DSM 19018 / LMG 30748 / EbN1) (Azoarcus sp. (strain EbN1)), this protein is Pyrimidine/purine nucleoside phosphorylase.